Reading from the N-terminus, the 333-residue chain is Anthranilate phosphoribosyltransferase (333 aa).

Residues glycine 78, 81–82 (GD), threonine 86, 88–91 (NVST), 106–114 (KHGNYSVSS), and serine 118 each bind 5-phospho-alpha-D-ribose 1-diphosphate. An anthranilate-binding site is contributed by glycine 78. A Mg(2+)-binding site is contributed by serine 90. Asparagine 109 contacts anthranilate. An anthranilate-binding site is contributed by arginine 164. Positions 222 and 223 each coordinate Mg(2+).

This sequence belongs to the anthranilate phosphoribosyltransferase family. As to quaternary structure, homodimer. Mg(2+) is required as a cofactor.

It carries out the reaction N-(5-phospho-beta-D-ribosyl)anthranilate + diphosphate = 5-phospho-alpha-D-ribose 1-diphosphate + anthranilate. It functions in the pathway amino-acid biosynthesis; L-tryptophan biosynthesis; L-tryptophan from chorismate: step 2/5. Catalyzes the transfer of the phosphoribosyl group of 5-phosphorylribose-1-pyrophosphate (PRPP) to anthranilate to yield N-(5'-phosphoribosyl)-anthranilate (PRA). The chain is Anthranilate phosphoribosyltransferase from Natronomonas pharaonis (strain ATCC 35678 / DSM 2160 / CIP 103997 / JCM 8858 / NBRC 14720 / NCIMB 2260 / Gabara) (Halobacterium pharaonis).